Consider the following 307-residue polypeptide: Aspartate carbamoyltransferase catalytic subunit (307 aa).

Residues Arg59 and Thr60 each contribute to the carbamoyl phosphate site. Position 87 (Lys87) interacts with L-aspartate. 3 residues coordinate carbamoyl phosphate: Arg109, His139, and Gln142. 2 residues coordinate L-aspartate: Arg172 and Arg224. Carbamoyl phosphate contacts are provided by Ala265 and Pro266.

It belongs to the aspartate/ornithine carbamoyltransferase superfamily. ATCase family. In terms of assembly, heterododecamer (2C3:3R2) of six catalytic PyrB chains organized as two trimers (C3), and six regulatory PyrI chains organized as three dimers (R2).

The enzyme catalyses carbamoyl phosphate + L-aspartate = N-carbamoyl-L-aspartate + phosphate + H(+). The protein operates within pyrimidine metabolism; UMP biosynthesis via de novo pathway; (S)-dihydroorotate from bicarbonate: step 2/3. Its function is as follows. Catalyzes the condensation of carbamoyl phosphate and aspartate to form carbamoyl aspartate and inorganic phosphate, the committed step in the de novo pyrimidine nucleotide biosynthesis pathway. The protein is Aspartate carbamoyltransferase catalytic subunit of Streptococcus agalactiae serotype Ia (strain ATCC 27591 / A909 / CDC SS700).